Consider the following 729-residue polypeptide: Glycine--tRNA ligase (729 aa).

A mitochondrion-targeting transit peptide spans 1-33; that stretch reads MPCLLPSLLRATRAALPLLSPPRVVAASASQRL. One can recognise a WHEP-TRS domain in the interval 53–109; sequence LLAPLRLAVRQQGDFVRKLKEDKAPQVDVDRAVAELKARKRVLEAKELALQPKDDIV. Lys194 is subject to N6-acetyllysine. Position 289 (Glu289) interacts with glycine. ATP contacts are provided by residues 321 to 323 and 332 to 333; these read RNE and RV. Glu340 is a glycine binding site. Tyr443 is modified (phosphotyrosine). 447-448 provides a ligand contact to ATP; sequence EI. Position 491 is an N6-acetyllysine (Lys491). 566 to 568 serves as a coordination point for glycine; the sequence is EPS. ATP is bound at residue Arg573. Ser690 is subject to Phosphoserine. Residue Thr726 is modified to Phosphothreonine.

Belongs to the class-II aminoacyl-tRNA synthetase family. Homodimer.

The protein localises to the cytoplasm. The protein resides in the mitochondrion. Its subcellular location is the cell projection. It localises to the axon. It is found in the secreted. The protein localises to the extracellular exosome. The catalysed reaction is tRNA(Gly) + glycine + ATP = glycyl-tRNA(Gly) + AMP + diphosphate. The enzyme catalyses 2 ATP + H(+) = P(1),P(4)-bis(5'-adenosyl) tetraphosphate + diphosphate. Catalyzes the ATP-dependent ligation of glycine to the 3'-end of its cognate tRNA, via the formation of an aminoacyl-adenylate intermediate (Gly-AMP). Also produces diadenosine tetraphosphate (Ap4A), a universal pleiotropic signaling molecule needed for cell regulation pathways, by direct condensation of 2 ATPs. Thereby, may play a special role in Ap4A homeostasis. This Mus musculus (Mouse) protein is Glycine--tRNA ligase (Gars1).